A 160-amino-acid chain; its full sequence is Photosystem I reaction center subunit XI (160 aa).

The next 2 helical transmembrane spans lie at 84–104 and 125–145; these read LIPA…YGLV and FAAG…FLLE.

Belongs to the PsaL family.

Its subcellular location is the cellular thylakoid membrane. This Microcystis aeruginosa (strain NIES-843 / IAM M-2473) protein is Photosystem I reaction center subunit XI.